The chain runs to 366 residues: Growth hormone secretagogue receptor type 1 (366 aa).

The Extracellular portion of the chain corresponds to 1–40 (MWNATPSEEPGSNLTRAELGWDAPPGNDSLADELLQLFPA). Residues Asn-13 and Asn-27 are each glycosylated (N-linked (GlcNAc...) asparagine). The helical transmembrane segment at 41–66 (PLLAGVTATCVALFVVGIAGNLLTML) threads the bilayer. The Cytoplasmic portion of the chain corresponds to 67–72 (VVSRFR). A helical transmembrane segment spans residues 73-96 (ELRTTTNLYLSSMAFSDLLIFLCM). At 97 to 117 (PLDLVRLWQYRPWNFGDLLCK) the chain is on the extracellular side. Cys-116 and Cys-198 form a disulfide bridge. Residues 118-139 (LFQFVSESCTYATVLTITALSV) traverse the membrane as a helical segment. At 140–162 (ERYFAICFPLRAKVVVTKGRVKL) the chain is on the cytoplasmic side. Residues 163–183 (VILVIWALAFCSAGPIFVLVG) traverse the membrane as a helical segment. Topologically, residues 184–211 (VEHENGTDPQDTNECRATEFAVRSGLLT) are extracellular. Asn-188 is a glycosylation site (N-linked (GlcNAc...) asparagine). The helical transmembrane segment at 212–235 (IMVWVSSVFFFLPVFCLTVLYSLI) threads the bilayer. Residues 236-263 (GRKLWRRKRGDGAVGSSLRDQNHRQTVK) are Cytoplasmic-facing. The chain crosses the membrane as a helical span at residues 264 to 285 (MLAVVVFAFILCWLPFHVGRYL). Topologically, residues 286–302 (FSKSFEPGSLEIAQISQ) are extracellular. Residues 303–326 (YCNLVSFVLFYLSAAINPILYNIM) form a helical membrane-spanning segment. The Cytoplasmic segment spans residues 327-366 (SKKYRVAVFKLLGFEPFSQRKLSTLKDESSRAWTKSSINT).

It belongs to the G-protein coupled receptor 1 family.

The protein resides in the cell membrane. In terms of biological role, receptor for ghrelin, coupled to G-alpha-11 proteins. Stimulates growth hormone secretion. Also binds other growth hormone releasing peptides (GHRP) (e.g. Met-enkephalin and GHRP-6) as well as non-peptide, low molecular weight secretagogues (e.g. L-692,429, MK-0677, adenosine). This is Growth hormone secretagogue receptor type 1 (GHSR) from Oryctolagus cuniculus (Rabbit).